A 392-amino-acid chain; its full sequence is 8-amino-7-oxononanoate synthase 1 (392 aa).

109-110 is a pyridoxal 5'-phosphate binding site; sequence GF. A substrate-binding site is contributed by histidine 134. Pyridoxal 5'-phosphate contacts are provided by residues serine 181, 206-209, and 237-240; these read DDAH and TLSK. An N6-(pyridoxal phosphate)lysine modification is found at lysine 240. Threonine 354 contributes to the substrate binding site.

It belongs to the class-II pyridoxal-phosphate-dependent aminotransferase family. BioF subfamily. As to quaternary structure, homodimer. Requires pyridoxal 5'-phosphate as cofactor.

The enzyme catalyses 6-carboxyhexanoyl-[ACP] + L-alanine + H(+) = (8S)-8-amino-7-oxononanoate + holo-[ACP] + CO2. It participates in cofactor biosynthesis; biotin biosynthesis. Functionally, catalyzes the decarboxylative condensation of pimeloyl-[acyl-carrier protein] and L-alanine to produce 8-amino-7-oxononanoate (AON), [acyl-carrier protein], and carbon dioxide. The polypeptide is 8-amino-7-oxononanoate synthase 1 (kbl) (Bacillus subtilis (strain 168)).